A 232-amino-acid polypeptide reads, in one-letter code: Cytidylate kinase (232 aa).

The disordered stretch occupies residues 1-21 (MSEDTPLVVAMDGPSGTGKSS). ATP is bound at residue 13 to 21 (GPSGTGKSS).

This sequence belongs to the cytidylate kinase family. Type 1 subfamily.

The protein resides in the cytoplasm. It catalyses the reaction CMP + ATP = CDP + ADP. The enzyme catalyses dCMP + ATP = dCDP + ADP. The chain is Cytidylate kinase from Nocardia farcinica (strain IFM 10152).